Reading from the N-terminus, the 207-residue chain is Probable GTP-binding protein EngB (207 aa).

One can recognise an EngB-type G domain in the interval 23–197 (AGIEVVFAGR…ETVIGRWLFA (175 aa)). GTP-binding positions include 31–38 (GRSNAGKS), 58–62 (GRTQL), 76–79 (DLPG), 143–146 (TKAD), and 176–178 (FSS). S38 and T60 together coordinate Mg(2+).

Belongs to the TRAFAC class TrmE-Era-EngA-EngB-Septin-like GTPase superfamily. EngB GTPase family. Mg(2+) serves as cofactor.

Necessary for normal cell division and for the maintenance of normal septation. This is Probable GTP-binding protein EngB from Methylobacillus flagellatus (strain ATCC 51484 / DSM 6875 / VKM B-1610 / KT).